Consider the following 511-residue polypeptide: Probable dolichyl pyrophosphate Glc1Man9GlcNAc2 alpha-1,3-glucosyltransferase (511 aa).

The next 11 helical transmembrane spans lie at Leu-4 to His-24, Val-94 to Val-112, Asp-124 to Val-144, Tyr-151 to Phe-171, Val-210 to Val-230, Pro-300 to Val-320, Leu-332 to Val-352, Ala-356 to Val-370, Tyr-377 to Phe-394, Trp-432 to Leu-452, and Tyr-469 to Gly-491.

The protein belongs to the ALG6/ALG8 glucosyltransferase family.

The protein resides in the endoplasmic reticulum membrane. The enzyme catalyses an alpha-D-Glc-(1-&gt;3)-alpha-D-Man-(1-&gt;2)-alpha-D-Man-(1-&gt;2)-alpha-D-Man-(1-&gt;3)-[alpha-D-Man-(1-&gt;2)-alpha-D-Man-(1-&gt;3)-[alpha-D-Man-(1-&gt;2)-alpha-D-Man-(1-&gt;6)]-alpha-D-Man-(1-&gt;6)]-beta-D-Man-(1-&gt;4)-beta-D-GlcNAc-(1-&gt;4)-alpha-D-GlcNAc-diphospho-di-trans,poly-cis-dolichol + a di-trans,poly-cis-dolichyl beta-D-glucosyl phosphate = an alpha-D-Glc-(1-&gt;3)-alpha-D-Glc-(1-&gt;3)-alpha-D-Man-(1-&gt;2)-alpha-D-Man-(1-&gt;2)-alpha-D-Man-(1-&gt;3)-[alpha-D-Man-(1-&gt;2)-alpha-D-Man-(1-&gt;3)-[alpha-D-Man-(1-&gt;2)-alpha-D-Man-(1-&gt;6)]-alpha-D-Man-(1-&gt;6)]-beta-D-Man-(1-&gt;4)-beta-D-GlcNAc-(1-&gt;4)-alpha-D-GlcNAc-diphospho-di-trans,poly-cis-dolichol + a di-trans,poly-cis-dolichyl phosphate + H(+). It participates in protein modification; protein glycosylation. Functionally, adds the second glucose residue to the lipid-linked oligosaccharide precursor for N-linked glycosylation. Transfers glucose from dolichyl phosphate glucose (Dol-P-Glc) onto the lipid-linked oligosaccharide Glc(1)Man(9)GlcNAc(2)-PP-Dol. Functions in developmental processes such as germband extension, the apical constriction of mesoderm precursor cells and ventral furrow formation in early embryogenesis prior to gastrulation. Involved in the glycosylation and intracellular distribution of shg (E-cadherin). Function in cell intercalation in the lateral epidermis during germband extension may be due to its effect on shg. The polypeptide is Probable dolichyl pyrophosphate Glc1Man9GlcNAc2 alpha-1,3-glucosyltransferase (Drosophila melanogaster (Fruit fly)).